We begin with the raw amino-acid sequence, 144 residues long: Cytochrome c-type biogenesis protein CcmE (144 aa).

Residues 1–7 (MKPRHKR) are Cytoplasmic-facing. The chain crosses the membrane as a helical; Signal-anchor for type II membrane protein span at residues 8–28 (ALIIIAALIAIGVAALLILNA). Over 29-144 (LNSNIALYVT…DQAQKNGSAK (116 aa)) the chain is Periplasmic. Heme-binding residues include histidine 121 and tyrosine 125.

It belongs to the CcmE/CycJ family.

The protein resides in the cell inner membrane. Heme chaperone required for the biogenesis of c-type cytochromes. Transiently binds heme delivered by CcmC and transfers the heme to apo-cytochromes in a process facilitated by CcmF and CcmH. In Polynucleobacter necessarius subsp. necessarius (strain STIR1), this protein is Cytochrome c-type biogenesis protein CcmE.